Reading from the N-terminus, the 131-residue chain is Small ribosomal subunit protein bS6 (131 aa).

The tract at residues Glu-98–Glu-131 is disordered. Residues Arg-104–Glu-131 are compositionally biased toward basic and acidic residues.

It belongs to the bacterial ribosomal protein bS6 family.

Binds together with bS18 to 16S ribosomal RNA. This is Small ribosomal subunit protein bS6 from Shewanella putrefaciens (strain CN-32 / ATCC BAA-453).